We begin with the raw amino-acid sequence, 402 residues long: Serine/threonine transporter SstT (402 aa).

Helical transmembrane passes span 17-37 (IAIG…ITVI), 44-64 (FVGG…ANAL), 78-98 (IIVL…ISHY), 138-158 (ALSQ…GFAM), 179-199 (IVRW…FDTI), 212-232 (VLIL…NPII), 295-315 (MAGA…TLGI), and 336-356 (ASGI…LFGI).

This sequence belongs to the dicarboxylate/amino acid:cation symporter (DAACS) (TC 2.A.23) family.

The protein resides in the cell membrane. It catalyses the reaction L-serine(in) + Na(+)(in) = L-serine(out) + Na(+)(out). It carries out the reaction L-threonine(in) + Na(+)(in) = L-threonine(out) + Na(+)(out). Functionally, involved in the import of serine and threonine into the cell, with the concomitant import of sodium (symport system). In Streptococcus thermophilus (strain CNRZ 1066), this protein is Serine/threonine transporter SstT.